We begin with the raw amino-acid sequence, 55 residues long: MAKGGREKIKLESTAGTGHFYTTSKNKRTTPEKLEFMKYDPKARKHVAYKEVKLK.

Basic and acidic residues predominate over residues 1-11 (MAKGGREKIKL). The tract at residues 1-27 (MAKGGREKIKLESTAGTGHFYTTSKNK) is disordered. The segment covering 14–24 (TAGTGHFYTTS) has biased composition (polar residues).

This sequence belongs to the bacterial ribosomal protein bL33 family.

This chain is Large ribosomal subunit protein bL33, found in Dechloromonas aromatica (strain RCB).